A 758-amino-acid polypeptide reads, in one-letter code: Xaa-Pro dipeptidyl-peptidase (758 aa).

Catalysis depends on charge relay system residues Ser349, Asp469, and His499.

This sequence belongs to the peptidase S15 family. Homodimer.

It is found in the cytoplasm. The enzyme catalyses Hydrolyzes Xaa-Pro-|- bonds to release unblocked, N-terminal dipeptides from substrates including Ala-Pro-|-p-nitroanilide and (sequentially) Tyr-Pro-|-Phe-Pro-|-Gly-Pro-|-Ile.. In terms of biological role, removes N-terminal dipeptides sequentially from polypeptides having unsubstituted N-termini provided that the penultimate residue is proline. The chain is Xaa-Pro dipeptidyl-peptidase from Streptococcus uberis (strain ATCC BAA-854 / 0140J).